Reading from the N-terminus, the 137-residue chain is Large-conductance mechanosensitive channel (137 aa).

Transmembrane regions (helical) follow at residues 9–29 and 79–99; these read AFAVKGNVVDMAVGIIIGAAF and IQSVLDFVIVAFAIFMGVKAI.

The protein belongs to the MscL family. Homopentamer.

Its subcellular location is the cell inner membrane. Functionally, channel that opens in response to stretch forces in the membrane lipid bilayer. May participate in the regulation of osmotic pressure changes within the cell. The polypeptide is Large-conductance mechanosensitive channel (Pseudomonas fluorescens (strain Pf0-1)).